A 326-amino-acid polypeptide reads, in one-letter code: Cytosolic sulfotransferase 12 (326 aa).

Residue 75–80 coordinates 3'-phosphoadenylyl sulfate; that stretch reads KSGTTW. Catalysis depends on H140, which acts as the Proton acceptor. 3'-phosphoadenylyl sulfate is bound by residues R162, S170, Y228, and 290–292; that span reads RKG.

The protein belongs to the sulfotransferase 1 family. In terms of assembly, dimer. Expressed in the aerial parts of seedlings, in roots, leaves and flowers. Not detected in stems and siliques.

Its subcellular location is the cytoplasm. Sulfotransferase that utilizes 3'-phospho-5'-adenylyl sulfate (PAPS) as sulfonate donor to catalyze the stereospecific sulfate conjugation of 24-epibrassinosteroids. Preferred substrates are 24-epicathasterone and 6-deoxo-24-epicathasterone. Low activity with 22-deoxy-24-epiteasterone. No activity with 24-epimers catasterone and brassinolide. Sulfonates salicylic acid. May be involved in detoxification. Enhances plant response to pathogen infection and contributes to long distance signaling in systemic acquired resistance (SAR). In Arabidopsis thaliana (Mouse-ear cress), this protein is Cytosolic sulfotransferase 12 (SOT12).